A 462-amino-acid polypeptide reads, in one-letter code: Putative E3 ubiquitin-protein ligase XBAT35 (462 aa).

ANK repeat units lie at residues 6 to 35 (SKGE…DLEW), 39 to 69 (EGKT…NVNA), and 75 to 104 (HAGT…NPLV). Disordered stretches follow at residues 277-341 (HPPV…GKAS) and 356-402 (SSPS…EGER). Over residues 304 to 317 (SLHTTMSDPSNLNH) the composition is skewed to polar residues. Low complexity predominate over residues 319–341 (SIGQASSSSGPSSSTAPPSGKAS). Residues 411–450 (CAICLDAPSEAVCVPCGHVAGCMSCLKEIKSKNWGCPVCR) form an RING-type zinc finger.

It catalyses the reaction S-ubiquitinyl-[E2 ubiquitin-conjugating enzyme]-L-cysteine + [acceptor protein]-L-lysine = [E2 ubiquitin-conjugating enzyme]-L-cysteine + N(6)-ubiquitinyl-[acceptor protein]-L-lysine.. Its pathway is protein modification; protein ubiquitination. Functionally, no E3 ubiquitin-protein ligase activity observed when associated with the E2 enzyme UBC8 in vitro. In Arabidopsis thaliana (Mouse-ear cress), this protein is Putative E3 ubiquitin-protein ligase XBAT35 (XBAT35).